The primary structure comprises 131 residues: Small ribosomal subunit protein uS11 (131 aa).

The protein belongs to the universal ribosomal protein uS11 family. In terms of assembly, part of the 30S ribosomal subunit. Interacts with proteins S7 and S18. Binds to IF-3.

Functionally, located on the platform of the 30S subunit, it bridges several disparate RNA helices of the 16S rRNA. Forms part of the Shine-Dalgarno cleft in the 70S ribosome. In Dictyoglomus turgidum (strain DSM 6724 / Z-1310), this protein is Small ribosomal subunit protein uS11.